The sequence spans 91 residues: Small ribosomal subunit protein bS16 (91 aa).

The protein belongs to the bacterial ribosomal protein bS16 family.

The sequence is that of Small ribosomal subunit protein bS16 from Latilactobacillus sakei subsp. sakei (strain 23K) (Lactobacillus sakei subsp. sakei).